A 206-amino-acid polypeptide reads, in one-letter code: Small ribosomal subunit protein uS4 (206 aa).

Positions 96–156 (SRLDNVVYRM…EKSKNQLRIQ (61 aa)) constitute an S4 RNA-binding domain.

The protein belongs to the universal ribosomal protein uS4 family. In terms of assembly, part of the 30S ribosomal subunit. Contacts protein S5. The interaction surface between S4 and S5 is involved in control of translational fidelity.

In terms of biological role, one of the primary rRNA binding proteins, it binds directly to 16S rRNA where it nucleates assembly of the body of the 30S subunit. Functionally, with S5 and S12 plays an important role in translational accuracy. This chain is Small ribosomal subunit protein uS4, found in Teredinibacter turnerae (strain ATCC 39867 / T7901).